Reading from the N-terminus, the 471-residue chain is UDP-N-acetylmuramate--L-alanine ligase (471 aa).

114–120 (GTHGKTT) provides a ligand contact to ATP.

Belongs to the MurCDEF family.

It localises to the cytoplasm. The catalysed reaction is UDP-N-acetyl-alpha-D-muramate + L-alanine + ATP = UDP-N-acetyl-alpha-D-muramoyl-L-alanine + ADP + phosphate + H(+). The protein operates within cell wall biogenesis; peptidoglycan biosynthesis. In terms of biological role, cell wall formation. In Sinorhizobium medicae (strain WSM419) (Ensifer medicae), this protein is UDP-N-acetylmuramate--L-alanine ligase.